The chain runs to 445 residues: Phospho-alpha-glucosidase PagL (445 aa).

4–71 (YSICIVGGGS…ELEEVIWTTD (68 aa)) is an NAD(+) binding site. Residues Arg94 and Asn148 each contribute to the substrate site. Position 171 (Cys171) interacts with Mn(2+). Residue Asp172 is the Proton donor of the active site. Position 201 (His201) interacts with Mn(2+). The active-site Proton acceptor is the Tyr264. Arg284 serves as a coordination point for substrate.

The protein belongs to the glycosyl hydrolase 4 family. In terms of assembly, homotetramer. NAD(+) serves as cofactor. The cofactor is Mn(2+).

Its function is as follows. Phospho-alpha-glucosidase that catalyzes the hydrolysis of p-nitrophenyl-alpha-D-glucopyranoside 6-phosphate, but is not able to cleave 'natural' phospho-alpha-glucosides produced via the phosphoenolpyruvate-dependent sugar phosphotransferase system (PEP-PTS). In Clostridium acetobutylicum (strain ATCC 824 / DSM 792 / JCM 1419 / IAM 19013 / LMG 5710 / NBRC 13948 / NRRL B-527 / VKM B-1787 / 2291 / W), this protein is Phospho-alpha-glucosidase PagL (pagL).